Reading from the N-terminus, the 493-residue chain is Chitobiosyldiphosphodolichol beta-mannosyltransferase (493 aa).

Residues 1–71 lie on the Lumenal side of the membrane; sequence MNRVAVVVLG…PISMSNSFKK (71 aa). Residues 72 to 92 traverse the membrane as a helical segment; sequence IPLISIFMWPLLAICKVLFQI. Topologically, residues 93–109 are cytoplasmic; it reads IQLMYVLLVKVPSPLNT. The helical intramembrane region spans 110–130; sequence ILVQSPPAIPTIFVMQIVCWI. Residues 131 to 493 lie on the Cytoplasmic side of the membrane; that stretch reads RGVHLVIDWH…SSSNSKSKKD (363 aa). The disordered stretch occupies residues 462–493; that stretch reads FIPSSSSSSSSSSSSSSSSSSSSSSNSKSKKD. Positions 465–493 are enriched in low complexity; it reads SSSSSSSSSSSSSSSSSSSSSSNSKSKKD.

The protein belongs to the glycosyltransferase group 1 family. Glycosyltransferase 33 subfamily.

It is found in the endoplasmic reticulum membrane. The enzyme catalyses an N,N'-diacetylchitobiosyl-diphospho-di-trans,poly-cis-dolichol + GDP-alpha-D-mannose = a beta-D-Man-(1-&gt;4)-beta-D-GlcNAc-(1-&gt;4)-alpha-D-GlcNAc-diphospho-di-trans,poly-cis-dolichol + GDP + H(+). It participates in protein modification; protein glycosylation. In terms of biological role, participates in the formation of the lipid-linked precursor oligosaccharide for N-glycosylation. Involved in assembling the dolichol-pyrophosphate-GlcNAc(2)-Man(5) intermediate on the cytoplasmic surface of the ER. The sequence is that of Chitobiosyldiphosphodolichol beta-mannosyltransferase (alg1) from Dictyostelium discoideum (Social amoeba).